The following is a 301-amino-acid chain: Ribonuclease Z (301 aa).

His61, His63, Asp65, His66, His140, Asp211, and His269 together coordinate Zn(2+). The active-site Proton acceptor is Asp65.

Belongs to the RNase Z family. As to quaternary structure, homodimer. Zn(2+) is required as a cofactor.

It carries out the reaction Endonucleolytic cleavage of RNA, removing extra 3' nucleotides from tRNA precursor, generating 3' termini of tRNAs. A 3'-hydroxy group is left at the tRNA terminus and a 5'-phosphoryl group is left at the trailer molecule.. Its function is as follows. Zinc phosphodiesterase, which displays some tRNA 3'-processing endonuclease activity. Probably involved in tRNA maturation, by removing a 3'-trailer from precursor tRNA. The chain is Ribonuclease Z from Bradyrhizobium diazoefficiens (strain JCM 10833 / BCRC 13528 / IAM 13628 / NBRC 14792 / USDA 110).